Reading from the N-terminus, the 149-residue chain is Arginine repressor (149 aa).

Belongs to the ArgR family.

The protein resides in the cytoplasm. Its pathway is amino-acid biosynthesis; L-arginine biosynthesis [regulation]. Functionally, regulates arginine biosynthesis genes. The protein is Arginine repressor of Alkaliphilus metalliredigens (strain QYMF).